The sequence spans 306 residues: Myb family transcription factor MOF1 (306 aa).

Residues 19 to 79 form the HTH myb-type domain; the sequence is RSKVPRLRWT…HLQMYRCSRL (61 aa). The H-T-H motif DNA-binding region spans 50-75; sequence PKLILQLMGVKGLTISHVKSHLQMYR.

Interacts with TPR1, TPR2 and TPR3. In terms of tissue distribution, expressed in roots, leaves, leaf sheaths, culms, panicles, lemmas, paleas, lodicules, stamens, and pistils.

The protein localises to the nucleus. Functionally, transcriptional repressor that plays a role in the regulation of organ identity and spikelet meristem determinacy. Interacts with the TPR corepressors to possibly repress the expression of downstream target genes. The protein is Myb family transcription factor MOF1 of Oryza sativa subsp. japonica (Rice).